Consider the following 894-residue polypeptide: MAWRCPRMGRVPLAWCLALCGWACMAPRGTQAEESPFVGNPGNITGARGLTGTLRCQLQVQGEPPEVHWLRDGQILELADSTQTQVPLGEDEQDDWIVVSQLRITSLQLSDTGQYQCLVFLGHQTFVSQPGYVGLEGLPYFLEEPEDRTVAANTPFNLSCQAQGPPEPVDLLWLQDAVPLATAPGHGPQRSLHVPGLNKTSSFSCEAHNAKGVTTSRTATITVLPQQPRNLHLVSRQPTELEVAWTPGLSGIYPLTHCTLQAVLSDDGMGIQAGEPDPPEEPLTSQASVPPHQLRLGSLHPHTPYHIRVACTSSQGPSSWTHWLPVETPEGVPLGPPENISATRNGSQAFVHWQEPRAPLQGTLLGYRLAYQGQDTPEVLMDIGLRQEVTLELQGDGSVSNLTVCVAAYTAAGDGPWSLPVPLEAWRPGQAQPVHQLVKEPSTPAFSWPWWYVLLGAVVAAACVLILALFLVHRRKKETRYGEVFEPTVERGELVVRYRVRKSYSRRTTEATLNSLGISEELKEKLRDVMVDRHKVALGKTLGEGEFGAVMEGQLNQDDSILKVAVKTMKIAICTRSELEDFLSEAVCMKEFDHPNVMRLIGVCFQGSERESFPAPVVILPFMKHGDLHSFLLYSRLGDQPVYLPTQMLVKFMADIASGMEYLSTKRFIHRDLAARNCMLNENMSVCVADFGLSKKIYNGDYYRQGRIAKMPVKWIAIESLADRVYTSKSDVWSFGVTMWEIATRGQTPYPGVENSEIYDYLRQGNRLKQPADCLDGLYALMSRCWELNPQDRPSFTELREDLENTLKALPPAQEPDEILYVNMDEGGGYPEPPGAAGGADPPTQPDPKDSCSCLTAAEVHPAGRYVLCPSTTPSPAQPADRGSPAAPGQEDGA.

The N-terminal stretch at 1–25 is a signal peptide; sequence MAWRCPRMGRVPLAWCLALCGWACM. The interaction with GAS6 stretch occupies residues 26 to 92; that stretch reads APRGTQAEES…QTQVPLGEDE (67 aa). Over 26 to 451 the chain is Extracellular; it reads APRGTQAEES…STPAFSWPWW (426 aa). Ig-like C2-type domains lie at 27-128 and 139-222; these read PRGT…TFVS and PYFL…ATIT. A glycan (N-linked (GlcNAc...) asparagine) is linked at Asn-43. Residues Cys-56 and Cys-117 are joined by a disulfide bond. Residues Asn-157 and Asn-198 are each glycosylated (N-linked (GlcNAc...) asparagine). Cys-160 and Cys-205 are disulfide-bonded. Fibronectin type-III domains follow at residues 227-331 and 336-428; these read QPRN…TPEG and PPEN…AWRP. 3 N-linked (GlcNAc...) asparagine glycosylation sites follow: Asn-339, Asn-345, and Asn-401. Residues 452-472 traverse the membrane as a helical segment; that stretch reads YVLLGAVVAAACVLILALFLV. At 473–894 the chain is on the cytoplasmic side; that stretch reads HRRKKETRYG…PAAPGQEDGA (422 aa). The 272-residue stretch at 536 to 807 folds into the Protein kinase domain; that stretch reads VALGKTLGEG…ELREDLENTL (272 aa). ATP-binding positions include 542-550 and Lys-567; that span reads LGEGEFGAV. Catalysis depends on Asp-672, which acts as the Proton acceptor. Tyr-703, Tyr-779, and Tyr-821 each carry phosphotyrosine; by autocatalysis. Disordered stretches follow at residues 823–853 and 866–894; these read NMDEGGGYPEPPGAAGGADPPTQPDPKDSCS and YVLCPSTTPSPAQPADRGSPAAPGQEDGA. Tyr-866 carries the post-translational modification Phosphotyrosine; by autocatalysis. Ser-884 is modified (phosphoserine).

Belongs to the protein kinase superfamily. Tyr protein kinase family. AXL/UFO subfamily. Heterodimer and heterotetramer with ligand GAS6. Interacts with CBL, GRB2, LCK, NCK2, PIK3R1, PIK3R2, PIK3R3, PLCG1, SOCS1 and TNS2. Part of a complex including AXL, TNK2 and GRB2, in which GRB2 promotes AXL recruitment by TNK2. Post-translationally, monoubiquitinated upon GAS6-binding. A very small proportion of the receptor could be subjected to polyubiquitination in a very transient fashion. Phosphorylated at tyrosine residues by autocatalysis, which activates kinase activity. Highly expressed in metastatic colon tumors. Expressed in primary colon tumors. Weakly expressed in normal colon tissue.

It is found in the cell membrane. It catalyses the reaction L-tyrosyl-[protein] + ATP = O-phospho-L-tyrosyl-[protein] + ADP + H(+). Its activity is regulated as follows. Activated by GAS6-binding and subsequent autophosphorylation. Its function is as follows. Receptor tyrosine kinase that transduces signals from the extracellular matrix into the cytoplasm by binding growth factor GAS6 and which is thus regulating many physiological processes including cell survival, cell proliferation, migration and differentiation. Ligand binding at the cell surface induces dimerization and autophosphorylation of AXL. Following activation by ligand, AXL binds and induces tyrosine phosphorylation of PI3-kinase subunits PIK3R1, PIK3R2 and PIK3R3; but also GRB2, PLCG1, LCK and PTPN11. Other downstream substrate candidates for AXL are CBL, NCK2, SOCS1 and TNS2. Recruitment of GRB2 and phosphatidylinositol 3 kinase regulatory subunits by AXL leads to the downstream activation of the AKT kinase. GAS6/AXL signaling plays a role in various processes such as endothelial cell survival during acidification by preventing apoptosis, optimal cytokine signaling during human natural killer cell development, hepatic regeneration, gonadotropin-releasing hormone neuron survival and migration, platelet activation, or regulation of thrombotic responses. Also plays an important role in inhibition of Toll-like receptors (TLRs)-mediated innate immune response. (Microbial infection) Acts as a receptor for lassa virus and lymphocytic choriomeningitis virus, possibly through GAS6 binding to phosphatidyl-serine at the surface of virion envelope. Functionally, (Microbial infection) Acts as a receptor for Ebolavirus, possibly through GAS6 binding to phosphatidyl-serine at the surface of virion envelope. In terms of biological role, (Microbial infection) Promotes Zika virus entry in glial cells, Sertoli cells and astrocytes. Additionally, Zika virus potentiates AXL kinase activity to antagonize type I interferon signaling and thereby promotes infection. Interferon signaling inhibition occurs via an SOCS1-dependent mechanism. The sequence is that of Tyrosine-protein kinase receptor UFO (AXL) from Homo sapiens (Human).